A 192-amino-acid polypeptide reads, in one-letter code: GTP cyclohydrolase-2 (192 aa).

50–54 (RLHSE) serves as a coordination point for GTP. Zn(2+) contacts are provided by Cys-55, Cys-66, and Cys-68. GTP is bound by residues 92-94 (EGR) and Thr-114. The active-site Proton acceptor is the Asp-126. The active-site Nucleophile is Arg-128. 2 residues coordinate GTP: Thr-149 and Lys-154.

The protein belongs to the GTP cyclohydrolase II family. It depends on Zn(2+) as a cofactor.

It catalyses the reaction GTP + 4 H2O = 2,5-diamino-6-hydroxy-4-(5-phosphoribosylamino)-pyrimidine + formate + 2 phosphate + 3 H(+). The protein operates within cofactor biosynthesis; riboflavin biosynthesis; 5-amino-6-(D-ribitylamino)uracil from GTP: step 1/4. Catalyzes the conversion of GTP to 2,5-diamino-6-ribosylamino-4(3H)-pyrimidinone 5'-phosphate (DARP), formate and pyrophosphate. In Helicobacter pylori (strain P12), this protein is GTP cyclohydrolase-2.